A 345-amino-acid chain; its full sequence is Acetylserotonin O-methyltransferase (345 aa).

S-adenosyl-L-methionine-binding positions include tyrosine 147, tryptophan 164, aspartate 210, 235–237 (GDF), and arginine 252. The Proton donor/acceptor role is filled by histidine 255. Residues aspartate 256, asparagine 302, and glutamine 306 each coordinate substrate.

The protein belongs to the class I-like SAM-binding methyltransferase superfamily. Cation-independent O-methyltransferase family. In terms of assembly, homodimer. Highly expressed in pineal gland. In the retina, 10- to 100-fold lower expression compared to pineal gland, if any.

The catalysed reaction is N-acetylserotonin + S-adenosyl-L-methionine = melatonin + S-adenosyl-L-homocysteine + H(+). The protein operates within aromatic compound metabolism; melatonin biosynthesis; melatonin from serotonin: step 1/2. Its function is as follows. Catalyzes the transfer of a methyl group onto N-acetylserotonin, producing melatonin (N-acetyl-5-methoxytryptamine). The chain is Acetylserotonin O-methyltransferase (ASMT) from Macaca mulatta (Rhesus macaque).